A 471-amino-acid polypeptide reads, in one-letter code: Ribulose bisphosphate carboxylase large chain (471 aa).

Residues asparagine 115 and threonine 165 each contribute to the substrate site. Catalysis depends on lysine 167, which acts as the Proton acceptor. Position 169 (lysine 169) interacts with substrate. 3 residues coordinate Mg(2+): lysine 193, aspartate 195, and glutamate 196. Lysine 193 is subject to N6-carboxylysine. Histidine 286 acts as the Proton acceptor in catalysis. The substrate site is built by arginine 287, histidine 319, and serine 371.

Belongs to the RuBisCO large chain family. Type I subfamily. In terms of assembly, heterohexadecamer of 8 large chains and 8 small chains. Requires Mg(2+) as cofactor.

The protein resides in the carboxysome. The catalysed reaction is 2 (2R)-3-phosphoglycerate + 2 H(+) = D-ribulose 1,5-bisphosphate + CO2 + H2O. It catalyses the reaction D-ribulose 1,5-bisphosphate + O2 = 2-phosphoglycolate + (2R)-3-phosphoglycerate + 2 H(+). RuBisCO catalyzes two reactions: the carboxylation of D-ribulose 1,5-bisphosphate, the primary event in carbon dioxide fixation, as well as the oxidative fragmentation of the pentose substrate in the photorespiration process. Both reactions occur simultaneously and in competition at the same active site. This Synechococcus sp. (strain RCC307) protein is Ribulose bisphosphate carboxylase large chain.